A 238-amino-acid chain; its full sequence is Cysteine-rich venom protein pseudechetoxin-like (238 aa).

Residues 1 to 19 (MIAFIVLLSLAAVLQQSSG) form the signal peptide. Positions 20 to 28 (TVDFASESS) are excised as a propeptide. The region spanning 38-164 (VDKHNALRRS…STKYLYVCQY (127 aa)) is the SCP domain. Intrachain disulfides connect Cys-75-Cys-153, Cys-92-Cys-165, Cys-148-Cys-162, Cys-184-Cys-191, Cys-187-Cys-196, Cys-200-Cys-233, Cys-209-Cys-227, and Cys-218-Cys-231. Residues 200-233 (CKYEDDFSNCKALAKNSKCQTEWIKSKCPAACFC) form the ShKT domain.

The protein belongs to the CRISP family. Expressed by the venom gland.

Its subcellular location is the secreted. Its function is as follows. Blocks olfactory (CNGA2) and retinal (CNGA1) CNG channel currents. Does not affect neither depolarization- nor caffeine-induced contraction of smooth muscle. This Notechis scutatus scutatus (Mainland tiger snake) protein is Cysteine-rich venom protein pseudechetoxin-like.